A 380-amino-acid chain; its full sequence is Queuine tRNA-ribosyltransferase (380 aa).

Asp-96 serves as the catalytic Proton acceptor. Residues 96 to 100 (DSGGF), Asp-150, Gln-193, and Gly-220 each bind substrate. The interval 251-257 (GVGAPDS) is RNA binding. Residue Asp-270 is the Nucleophile of the active site. Residues 275–279 (TRIAR) are RNA binding; important for wobble base 34 recognition. Zn(2+) contacts are provided by Cys-308, Cys-310, Cys-313, and His-339.

Belongs to the queuine tRNA-ribosyltransferase family. In terms of assembly, homodimer. Within each dimer, one monomer is responsible for RNA recognition and catalysis, while the other monomer binds to the replacement base PreQ1. Zn(2+) is required as a cofactor.

The enzyme catalyses 7-aminomethyl-7-carbaguanine + guanosine(34) in tRNA = 7-aminomethyl-7-carbaguanosine(34) in tRNA + guanine. It functions in the pathway tRNA modification; tRNA-queuosine biosynthesis. In terms of biological role, catalyzes the base-exchange of a guanine (G) residue with the queuine precursor 7-aminomethyl-7-deazaguanine (PreQ1) at position 34 (anticodon wobble position) in tRNAs with GU(N) anticodons (tRNA-Asp, -Asn, -His and -Tyr). Catalysis occurs through a double-displacement mechanism. The nucleophile active site attacks the C1' of nucleotide 34 to detach the guanine base from the RNA, forming a covalent enzyme-RNA intermediate. The proton acceptor active site deprotonates the incoming PreQ1, allowing a nucleophilic attack on the C1' of the ribose to form the product. After dissociation, two additional enzymatic reactions on the tRNA convert PreQ1 to queuine (Q), resulting in the hypermodified nucleoside queuosine (7-(((4,5-cis-dihydroxy-2-cyclopenten-1-yl)amino)methyl)-7-deazaguanosine). This Streptococcus mutans serotype c (strain ATCC 700610 / UA159) protein is Queuine tRNA-ribosyltransferase.